We begin with the raw amino-acid sequence, 373 residues long: 2-aminoethylphosphonate--pyruvate transaminase (373 aa).

Position 191 is an N6-(pyridoxal phosphate)lysine (Lys191).

The protein belongs to the class-V pyridoxal-phosphate-dependent aminotransferase family. PhnW subfamily. As to quaternary structure, homodimer. Pyridoxal 5'-phosphate is required as a cofactor.

The enzyme catalyses (2-aminoethyl)phosphonate + pyruvate = phosphonoacetaldehyde + L-alanine. In terms of biological role, involved in phosphonate degradation. This chain is 2-aminoethylphosphonate--pyruvate transaminase, found in Burkholderia ambifaria (strain MC40-6).